Reading from the N-terminus, the 739-residue chain is Probable beta-glucosidase L (739 aa).

An N-terminal signal peptide occupies residues 1-17; that stretch reads MQTLFLSLLAAAVTVHA. N-linked (GlcNAc...) asparagine glycosylation is found at Asn-40 and Asn-224. Asp-252 is an active-site residue. Residue Asn-398 is glycosylated (N-linked (GlcNAc...) asparagine).

Belongs to the glycosyl hydrolase 3 family.

Its subcellular location is the secreted. The enzyme catalyses Hydrolysis of terminal, non-reducing beta-D-glucosyl residues with release of beta-D-glucose.. It participates in glycan metabolism; cellulose degradation. Functionally, beta-glucosidases are one of a number of cellulolytic enzymes involved in the degradation of cellulosic biomass. Catalyzes the last step releasing glucose from the inhibitory cellobiose. This is Probable beta-glucosidase L (bglL) from Aspergillus fumigatus (strain ATCC MYA-4609 / CBS 101355 / FGSC A1100 / Af293) (Neosartorya fumigata).